Reading from the N-terminus, the 442-residue chain is D-galactonate dehydratase family member SSLG_02014 (442 aa).

A substrate-binding site is contributed by His161. Residue Tyr197 is the Proton donor/acceptor of the active site. A Mg(2+)-binding site is contributed by Asp246. His248 acts as the Proton donor/acceptor in catalysis. Mg(2+) contacts are provided by Glu272 and Glu298. Substrate is bound by residues Glu298, Arg319, His348, Asp352, and Glu375.

The protein belongs to the mandelate racemase/muconate lactonizing enzyme family. GalD subfamily. Mg(2+) serves as cofactor.

It catalyses the reaction D-mannonate = 2-dehydro-3-deoxy-D-gluconate + H2O. Its function is as follows. Has low D-mannonate dehydratase activity (in vitro), suggesting that this is not a physiological substrate and that it has no significant role in D-mannonate degradation in vivo. Has no detectable activity with a panel of 70 other acid sugars (in vitro). This chain is D-galactonate dehydratase family member SSLG_02014, found in Streptomyces sp. (strain SPB78).